Reading from the N-terminus, the 306-residue chain is Methionyl-tRNA formyltransferase (306 aa).

109–112 lines the (6S)-5,6,7,8-tetrahydrofolate pocket; it reads SILP.

It belongs to the Fmt family.

It carries out the reaction L-methionyl-tRNA(fMet) + (6R)-10-formyltetrahydrofolate = N-formyl-L-methionyl-tRNA(fMet) + (6S)-5,6,7,8-tetrahydrofolate + H(+). Attaches a formyl group to the free amino group of methionyl-tRNA(fMet). The formyl group appears to play a dual role in the initiator identity of N-formylmethionyl-tRNA by promoting its recognition by IF2 and preventing the misappropriation of this tRNA by the elongation apparatus. In Herpetosiphon aurantiacus (strain ATCC 23779 / DSM 785 / 114-95), this protein is Methionyl-tRNA formyltransferase.